A 365-amino-acid polypeptide reads, in one-letter code: MIGDLMKNNNNGDVVDNEVNNRLSRWHHNSSRIIRVSRASGGKDRHSKVLTSKGPRDRRVRLSVSTALQFYDLQDRLGYDQPSKAVEWLIKAAEDSISELPSLNNTHFPTDDENHQNQTLTTVAANSLSKSACSSNSDTSKNSSGLSLSRSELRDKARERARERTAKETKERDHNHTSFTDLLNSGSDPVNSNRQWMASAPSSSPMEYFSSGLILGSGQQTHFPISTNSHPFSSISDHHHHHPHHQHQEFSFVPDHLISPAESNGGAFNLDFNMSTPSGAGAAVSAASGGGFSGFNRGTLQSNSTNQHQSFLANLQRFPTSESGGGPQFLFGALPAENHHHNHQFQLYYENGCRNSSEHKGKGKN.

The TCP domain maps to 42-100 (GKDRHSKVLTSKGPRDRRVRLSVSTALQFYDLQDRLGYDQPSKAVEWLIKAAEDSISEL). Residues 130-150 (KSACSSNSDTSKNSSGLSLSR) are compositionally biased toward low complexity. Disordered stretches follow at residues 130–202 (KSAC…SAPS) and 220–245 (QTHF…HPHH). In terms of domain architecture, R spans 151 to 172 (SELRDKARERARERTAKETKER). A compositionally biased stretch (basic and acidic residues) spans 151 to 176 (SELRDKARERARERTAKETKERDHNH). The span at 177-202 (TSFTDLLNSGSDPVNSNRQWMASAPS) shows a compositional bias: polar residues.

In terms of assembly, interacts with SPL. Interacts with CRY1. Expressed in cotyledons, particularly in the vascular region, in leaves, roots, buds, flowers and immature siliques.

The protein resides in the nucleus. Its function is as follows. Plays a pivotal role in the control of morphogenesis of shoot organs by negatively regulating the expression of boundary-specific genes such as CUC genes, probably through the induction of miRNA (e.g. miR164). Participates in ovule development. Promotes light-regulated transcription of CHS, CAB, HYH and HY5. Positively regulates photomorphogenesis (e.g. hypocotyl elongation inhibition and cotyledon opening in response to blue light). The chain is Transcription factor TCP2 from Arabidopsis thaliana (Mouse-ear cress).